Here is a 369-residue protein sequence, read N- to C-terminus: Uroporphyrinogen decarboxylase (369 aa).

Substrate contacts are provided by residues 28-32, Asp78, Tyr154, Ser209, and His339; that span reads RQAGR.

Belongs to the uroporphyrinogen decarboxylase family. Homodimer.

It is found in the cytoplasm. The enzyme catalyses uroporphyrinogen III + 4 H(+) = coproporphyrinogen III + 4 CO2. It participates in porphyrin-containing compound metabolism; protoporphyrin-IX biosynthesis; coproporphyrinogen-III from 5-aminolevulinate: step 4/4. Its function is as follows. Catalyzes the decarboxylation of four acetate groups of uroporphyrinogen-III to yield coproporphyrinogen-III. The chain is Uroporphyrinogen decarboxylase from Polaromonas sp. (strain JS666 / ATCC BAA-500).